The sequence spans 694 residues: Elongation factor G (694 aa).

A tr-type G domain is found at 10–285 (EKTRNIGIMA…GVVDYLPSPL (276 aa)). GTP-binding positions include 19–26 (AHIDAGKT), 83–87 (DTPGH), and 137–140 (NKMD).

It belongs to the TRAFAC class translation factor GTPase superfamily. Classic translation factor GTPase family. EF-G/EF-2 subfamily.

The protein localises to the cytoplasm. Functionally, catalyzes the GTP-dependent ribosomal translocation step during translation elongation. During this step, the ribosome changes from the pre-translocational (PRE) to the post-translocational (POST) state as the newly formed A-site-bound peptidyl-tRNA and P-site-bound deacylated tRNA move to the P and E sites, respectively. Catalyzes the coordinated movement of the two tRNA molecules, the mRNA and conformational changes in the ribosome. This is Elongation factor G from Lactobacillus delbrueckii subsp. bulgaricus (strain ATCC BAA-365 / Lb-18).